Consider the following 219-residue polypeptide: 2-hydroxy-3-keto-5-methylthiopentenyl-1-phosphate phosphatase (219 aa).

It belongs to the HAD-like hydrolase superfamily. MtnX family.

It carries out the reaction 2-hydroxy-5-methylsulfanyl-3-oxopent-1-enyl phosphate + H2O = 1,2-dihydroxy-5-(methylsulfanyl)pent-1-en-3-one + phosphate. Its pathway is amino-acid biosynthesis; L-methionine biosynthesis via salvage pathway; L-methionine from S-methyl-5-thio-alpha-D-ribose 1-phosphate: step 4/6. Functionally, dephosphorylates 2-hydroxy-3-keto-5-methylthiopentenyl-1-phosphate (HK-MTPenyl-1-P) yielding 1,2-dihydroxy-3-keto-5-methylthiopentene (DHK-MTPene). The sequence is that of 2-hydroxy-3-keto-5-methylthiopentenyl-1-phosphate phosphatase from Exiguobacterium sibiricum (strain DSM 17290 / CCUG 55495 / CIP 109462 / JCM 13490 / 255-15).